The sequence spans 600 residues: MTAEDSASAVAMSNPSPSSSSKSSSGHPQHHCTVPEGVAGAPNEAALVSLMERSGYGMVQENGQRKYGPPPGWQGTSPPRGCEIFVGKIPRDVYEDELVPVFESVGRIYEMRLMMDFDGKNRGYAFVMYTQKHEAKRAVRELNNFEIRPGRLLGVCSSVDNCRLFIGGIPKTKKREEILEEVSKVTEGVLDVIVYASAADKMKNRGFAFVEYESHRAAAMARRKLMPGRIQLWGHQIAVDWAEPEIDVDEDVMETVKILYVRNLMIETSEEILRQTFGQFNPGCVERVKKIRDYAFVHFASRDDAVVAMDNLNGTEIEGSRIEVTLAKPVDKEQYTRYQKASKGTAAATTVESTQQSYVYQCDPYTLAYYGYPYNTLIGPNRDYFIKGTVRGRGRAGASSRGPGPRGSYLGGYSAGRGIYSRYHEGKTKLPDKPYEIMSNLELAAVNPVGIKPGTMALPALGAQYPTVFSAAPATKLMEEGKIHPVEHLINPLALQHDPTAASATAAVIPAVSTPPPFQGRPITPVYAMAHNIQRIPAAAASLYGAGYMPIAAHANTATLAALQKNAAVAAAYGGYAGYMPQAFPAATFQMPIHDVYQTY.

Residues 1–25 (MTAEDSASAVAMSNPSPSSSSKSSS) are compositionally biased toward low complexity. The segment at 1–37 (MTAEDSASAVAMSNPSPSSSSKSSSGHPQHHCTVPEG) is disordered. 3 consecutive RRM domains span residues 82-160 (CEIF…SSVD), 162-244 (CRLF…WAEP), and 257-329 (KILY…LAKP).

It belongs to the RRM RBM47 family. As to quaternary structure, homodimer. May interact with MAVS; may regulate MAVS lysosomal degradation.

Its subcellular location is the nucleus. It is found in the cytoplasm. In terms of biological role, single-stranded RNA-binding protein that functions in a variety of RNA processes, including alternative splicing, RNA stabilization, and RNA editing. Independently of its RNA-binding activity, could negatively regulate MAVS by promoting its lysosomal degradation. This is RNA-binding protein 47 (rbm47) from Danio rerio (Zebrafish).